The primary structure comprises 281 residues: Transcription factor LBX1 (281 aa).

Positions methionine 1–leucine 20 are enriched in basic and acidic residues. Residues methionine 1–proline 35 are disordered. Residues arginine 125–leucine 184 constitute a DNA-binding region (homeobox). Residues asparagine 214–aspartate 281 are disordered. Residues serine 253–aspartate 267 are compositionally biased toward polar residues. A compositionally biased stretch (acidic residues) spans cysteine 268–aspartate 281.

Interacts with SKOR1 which acts as a transcriptional corepressor.

The protein localises to the nucleus. Functionally, transcription factor required for the development of GABAergic interneurons in the dorsal horn of the spinal cord and migration and further development of hypaxial muscle precursor cells for limb muscles, diaphragm and hypoglossal cord. This is Transcription factor LBX1 (LBX1) from Homo sapiens (Human).